A 370-amino-acid polypeptide reads, in one-letter code: MREETAEQPAPLRSGLTTGSCATATSLAAARLLLSGQISDAVEIVLPKGKQVQMRLEFCRLVDNFAEAGTLKDAGDDPDVTHGALVFARVRLEMAPGVRFVAGAGVGSVTRPGLVLAVGEPAINPVPRRMMTEHLLQLAEELGYSGGFEVTIGVEGGEALALKTMNPRLGILGGLSILGTSGIVRPFSCAAYIASIHQGIDVATTNGYRHIAACTGNASEDTMRRVYNIPDIALIEMGDFVGAVLKHLRKVPVDKLSLCGGFGKISKLAAGHMDLHSRHSSIDLPQLALWAADTGADADLQQRIRDANTSQQALAMCATAGVPLGDEVCRHALAFARSVVPAQVQVEVFAIDRQGGIVGQAGVALSKEHT.

The protein belongs to the CbiD family.

The enzyme catalyses Co-precorrin-5B + S-adenosyl-L-methionine = Co-precorrin-6A + S-adenosyl-L-homocysteine. The protein operates within cofactor biosynthesis; adenosylcobalamin biosynthesis; cob(II)yrinate a,c-diamide from sirohydrochlorin (anaerobic route): step 6/10. In terms of biological role, catalyzes the methylation of C-1 in cobalt-precorrin-5B to form cobalt-precorrin-6A. In Pseudomonas savastanoi pv. phaseolicola (strain 1448A / Race 6) (Pseudomonas syringae pv. phaseolicola (strain 1448A / Race 6)), this protein is Cobalt-precorrin-5B C(1)-methyltransferase.